The sequence spans 837 residues: Putative outer membrane protein assembly factor TP_0326 (837 aa).

An N-terminal signal peptide occupies residues 1-21; sequence MLKKASAFLIASCCVMSLAWA. At 22-433 the chain is on the periplasmic side; that stretch reads QANDNWYEGK…ILNVEEQSTA (412 aa). POTRA domains follow at residues 31 to 105, 106 to 182, 185 to 273, 276 to 354, and 357 to 430; these read KPIS…VKER, PSVK…IQEG, TVVS…VVEG, YRYG…VVER, and SHVE…VEEQ. The beta stranded transmembrane segment at 434-442 threads the bilayer; that stretch reads NVQFGVTFS. Residues 443 to 450 lie on the Extracellular; loop L1 side of the membrane; it reads GVGEAGTF. Residues 451-461 traverse the membrane as a beta stranded segment; the sequence is PLSLFCQWEEK. Topologically, residues 462-468 are periplasmic; that stretch reads NFLGKGN. A beta stranded membrane pass occupies residues 469–476; sequence EISVNATL. Topologically, residues 477–478 are extracellular; loop L2; the sequence is GS. The beta stranded transmembrane segment at 479-489 threads the bilayer; the sequence is EAQSLKLGYVE. Over 490 to 499 the chain is Periplasmic; that stretch reads RWFLGSPLTV. Residues 500–520 traverse the membrane as a beta stranded segment; it reads GFDFELTHKNLFVYRAGSYGN. Topologically, residues 521 to 530 are extracellular; loop L3; that stretch reads GLPHPYTSRE. A beta stranded transmembrane segment spans residues 531–543; it reads QWASSPGLAESFR. The Periplasmic segment spans residues 544 to 554; the sequence is LKYSRFESAIG. Residues 555–568 traverse the membrane as a beta stranded segment; it reads AHTGYQWYPRYAVI. The Extracellular; loop L4 portion of the chain corresponds to 569–601; sequence RVNGGVDFRVVKNFYDKDNNQPFDLTVKEQLNW. A beta stranded membrane pass occupies residues 602–615; the sequence is TSINSFWTSVSFDG. Residues 616–623 lie on the Periplasmic side of the membrane; the sequence is RDFAYDPS. A beta stranded membrane pass occupies residues 624 to 636; the sequence is SGWFLGQRCTFNG. At 637 to 644 the chain is on the extracellular; loop L5 side; sequence LVPFLEKE. A beta stranded membrane pass occupies residues 645–658; the sequence is HSFRSDTKAEFYVT. The Periplasmic segment spans residues 659-667; the sequence is LLNYPVSAV. Residues 668-682 traverse the membrane as a beta stranded segment; that stretch reads WNLKFVLAFYTGVSV. At 683–724 the chain is on the extracellular; loop L6 side; that stretch reads QTYYGRRKSENGKGNGVRSGALVIDGVLVGRGWSEDAKKNTG. Residues 725–736 traverse the membrane as a beta stranded segment; sequence DLLLHHWIEFRW. Over 737-741 the chain is Periplasmic; that stretch reads PLAHG. Residues 742–756 traverse the membrane as a beta stranded segment; the sequence is IVSFDFFFDAAMVYN. Over 757 to 786 the chain is Extracellular; loop L7; the sequence is IESQSPNGSSSASSSSSSSSSSSRTTSSEG. The tract at residues 761 to 785 is disordered; sequence SPNGSSSASSSSSSSSSSSRTTSSE. Residues 765–784 are compositionally biased toward low complexity; it reads SSSASSSSSSSSSSSRTTSS. Residues 787 to 799 traverse the membrane as a beta stranded segment; sequence LYKMSYGPGLRFT. At 800–802 the chain is on the periplasmic side; it reads LPQ. A beta stranded transmembrane segment spans residues 803-814; sequence FPLKLAFANTFT. Residues 815–824 are Extracellular; loop L8-facing; that stretch reads SPGGIPKTKK. A beta stranded transmembrane segment spans residues 825-829; the sequence is NWNFV. Residues 830-837 lie on the Periplasmic side of the membrane; it reads LSFTVNNL.

This sequence belongs to the BamA family. Part of 2 complexes of about 239 and 164 kDa.

It localises to the cell outer membrane. Functionally, might be part of the outer membrane protein assembly complex, which is involved in assembly and insertion of beta-barrel proteins into the outer membrane. Both rabbit immune serum and rabbit antiserum specific for extracytoplasmic loop L4 promote bacteria internalization by rabbit peritoneal macrophages. Pools of human syphilitic sera from the USA and Columbia recognize both the N-terminal POTRA-containing and C-terminal beta-barrel domains as well as loop L4, showing this protein stimulates the immune system in both humans and rabbits. The sequence is that of Putative outer membrane protein assembly factor TP_0326 (tp92) from Treponema pallidum (strain Nichols).